Here is a 480-residue protein sequence, read N- to C-terminus: Gamma-aminobutyric acid receptor subunit rho-1 (480 aa).

An N-terminal signal peptide occupies residues 1-21 (MLAVQNMKFGIFLLWWGWVLA). The Extracellular portion of the chain corresponds to 22-281 (AESTAHWPGR…LYINFTLRRH (260 aa)). Basic and acidic residues predominate over residues 29–38 (PGREVHEPSR). Positions 29-67 (PGREVHEPSRKGSRPQRQRRGAHDDAHKQGSPILRRSSD) are disordered. Basic residues predominate over residues 39–48 (KGSRPQRQRR). Arg126 is a 4-aminobutanoate binding site. Asn141 carries an N-linked (GlcNAc...) asparagine glycan. 4-aminobutanoate is bound at residue Ser190. An intrachain disulfide couples Cys199 to Cys213. 4-aminobutanoate is bound at residue Glu218. N-linked (GlcNAc...) asparagine glycans are attached at residues Asn235 and Asn275. A helical membrane pass occupies residues 282–302 (IFFFLLQTYFPATLMVMLSWV). Residues 303–314 (SFWIDRRAVPAR) are Cytoplasmic-facing. A helical transmembrane segment spans residues 315–335 (VPLGITTVLTMSTIITGVNAS). Topologically, residues 336 to 346 (MPRVSYIKAVD) are extracellular. A helical transmembrane segment spans residues 347 to 367 (IYLWVSFVFVFLSVLEYAAVN). Topologically, residues 368 to 458 (YLTTVQERKE…MRINTHAIDK (91 aa)) are cytoplasmic. Residues 459-479 (YSRIIFPAAYILFNLIYWSIF) traverse the membrane as a helical segment. Residue Ser480 is a topological domain, extracellular.

It belongs to the ligand-gated ion channel (TC 1.A.9) family. Gamma-aminobutyric acid receptor (TC 1.A.9.5) subfamily. GABRR1 sub-subfamily. In terms of assembly, three rho subunits (rho-1/GBRR1, rho-2/GBRR2 and rho-3/GBRR3) coassemble either to form functional homopentamers or heteropentamers. Rho-1/GBRR1 subunits can also associate with alpha-1/GBRA1 subunits to form a functional GABAAR. Interacts with SQSTM1. Expressed in the cerebellum.

The protein localises to the postsynaptic cell membrane. The protein resides in the cell membrane. The enzyme catalyses chloride(in) = chloride(out). With respect to regulation, inhibited by TPMPA, a rho-specific antagonist, when forming a homopentamer. In contrast with other GABAARs, rho-1 GABAAR is not inhibited by bicuculline when forming a homopentamer. In terms of biological role, rho subunit of the pentameric ligand-gated chloride channels responsible for mediating the effects of gamma-aminobutyric acid (GABA), the major inhibitory neurotransmitter in the brain. Rho-containing GABA-gated chloride channels are a subclass of GABA(A) receptors (GABAARs) entirely composed of rho subunits, where GABA molecules bind at the rho intersubunit interfaces. When activated by GABA, rho-GABAARs selectively allow the flow of chloride anions across the cell membrane down their electrochemical gradient. Rho-1 subunits are primarily expressed in retina where rho-1-containing GABAARs play a role in retinal neurotransmission. Rho-1 GABAARs are also involved in neuronal tonic (extrasynaptic) and phasic (synaptic) transmission in the Purkinje neurons of the cerebellum. Rho-1 GABAARs may also contribute to the regulation of glial development in the cerebellum by controlling extrasynaptic transmission. The polypeptide is Gamma-aminobutyric acid receptor subunit rho-1 (Mus musculus (Mouse)).